A 266-amino-acid polypeptide reads, in one-letter code: MMDESADIKPVPTSEDVAAPSGTEPVAPAPKKKRARTSTKAIMAAIEQRLGHTFADISLLTTAFTHVSALKSSRGRCDSYQRLEFLGDHVLGLVVSDMLYRAFPKADEGELSKRLADLVRKETCIDVAKSLDLQEGVKLGAVGAGAGARLRRSVLGDICEAVIGAVYLDGGYAAAAAFVERNWLERMRKPVRPLRDPKTVLQEWAQGKGLPTPVYREVERTGPHHDPRFRVAVELPGLESSEGIGGSKRAAEKAAASAMIVREGVK.

A disordered region spans residues 1–35 (MMDESADIKPVPTSEDVAAPSGTEPVAPAPKKKRA). Residues 43-171 (MAAIEQRLGH…VIGAVYLDGG (129 aa)) form the RNase III domain. Glu84 lines the Mg(2+) pocket. The active site involves Asp88. Residues Asp157 and Glu160 each coordinate Mg(2+). Glu160 is a catalytic residue. The 70-residue stretch at 196–265 (DPKTVLQEWA…ASAMIVREGV (70 aa)) folds into the DRBM domain.

The protein belongs to the ribonuclease III family. In terms of assembly, homodimer. Mg(2+) is required as a cofactor.

It is found in the cytoplasm. The enzyme catalyses Endonucleolytic cleavage to 5'-phosphomonoester.. Functionally, digests double-stranded RNA. Involved in the processing of primary rRNA transcript to yield the immediate precursors to the large and small rRNAs (23S and 16S). Processes some mRNAs, and tRNAs when they are encoded in the rRNA operon. Processes pre-crRNA and tracrRNA of type II CRISPR loci if present in the organism. This is Ribonuclease 3 from Nitrobacter winogradskyi (strain ATCC 25391 / DSM 10237 / CIP 104748 / NCIMB 11846 / Nb-255).